Consider the following 335-residue polypeptide: L-lactate dehydrogenase B chain (335 aa).

NAD(+) contacts are provided by residues 29-57 (GQVG…VEDK) and R99. R106, N138, and R169 together coordinate substrate. N138 is a binding site for NAD(+). H193 functions as the Proton acceptor in the catalytic mechanism. A substrate-binding site is contributed by T248.

The protein belongs to the LDH/MDH superfamily. LDH family. As to quaternary structure, homotetramer.

It localises to the cytoplasm. The catalysed reaction is (S)-lactate + NAD(+) = pyruvate + NADH + H(+). Its pathway is fermentation; pyruvate fermentation to lactate; (S)-lactate from pyruvate: step 1/1. Interconverts simultaneously and stereospecifically pyruvate and lactate with concomitant interconversion of NADH and NAD(+). In Sceloporus undulatus (Eastern fence lizard), this protein is L-lactate dehydrogenase B chain (LDHB).